Consider the following 104-residue polypeptide: UPF0134 protein MPN_104 (104 aa).

The protein belongs to the UPF0134 family.

The sequence is that of UPF0134 protein MPN_104 from Mycoplasma pneumoniae (strain ATCC 29342 / M129 / Subtype 1) (Mycoplasmoides pneumoniae).